The following is a 141-amino-acid chain: Nucleoside diphosphate kinase (141 aa).

Positions 9, 57, 85, 91, 102, and 112 each coordinate ATP. H115 acts as the Pros-phosphohistidine intermediate in catalysis.

It belongs to the NDK family. Homotetramer. Mg(2+) is required as a cofactor.

The protein resides in the cytoplasm. It carries out the reaction a 2'-deoxyribonucleoside 5'-diphosphate + ATP = a 2'-deoxyribonucleoside 5'-triphosphate + ADP. The catalysed reaction is a ribonucleoside 5'-diphosphate + ATP = a ribonucleoside 5'-triphosphate + ADP. Major role in the synthesis of nucleoside triphosphates other than ATP. The ATP gamma phosphate is transferred to the NDP beta phosphate via a ping-pong mechanism, using a phosphorylated active-site intermediate. The chain is Nucleoside diphosphate kinase from Chlamydia felis (strain Fe/C-56) (Chlamydophila felis).